The chain runs to 964 residues: Translation initiation factor IF-2 (964 aa).

The segment at 35–353 (ASSTIEPPVV…RQKRNEYESM (319 aa)) is disordered. The segment covering 64–108 (KPTPAKPAAKPGAPAPKPGTAQKPTAPTPGAVAAPKPGTAAAKPT) has biased composition (low complexity). The span at 124-133 (PAKPTAPKPA) shows a compositional bias: pro residues. Residues 145-155 (AAKKAAEDKAT) show a composition bias toward basic and acidic residues. Residues 166 to 178 (NAMPRPMAKPGPK) show a composition bias toward pro residues. Residues 220–233 (PRPQGGQRSGAPRD) are compositionally biased toward low complexity. Composition is skewed to gly residues over residues 234-252 (GQGG…GPRP) and 290-333 (GKGG…GRPG). Over residues 337-346 (RRGRKSKRQK) the composition is skewed to basic residues. In terms of domain architecture, tr-type G spans 459–631 (KRPPVVTVMG…VCLTADAELD (173 aa)). The G1 stretch occupies residues 468 to 475 (GHVDHGKT). Position 468–475 (468–475 (GHVDHGKT)) interacts with GTP. The G2 stretch occupies residues 493–497 (GITQG). A G3 region spans residues 518–521 (DTPG). Residues 518 to 522 (DTPGH) and 572 to 575 (NKID) each bind GTP. The interval 572 to 575 (NKID) is G4. Residues 608-610 (SAK) are G5.

This sequence belongs to the TRAFAC class translation factor GTPase superfamily. Classic translation factor GTPase family. IF-2 subfamily.

Its subcellular location is the cytoplasm. Its function is as follows. One of the essential components for the initiation of protein synthesis. Protects formylmethionyl-tRNA from spontaneous hydrolysis and promotes its binding to the 30S ribosomal subunits. Also involved in the hydrolysis of GTP during the formation of the 70S ribosomal complex. The sequence is that of Translation initiation factor IF-2 from Corynebacterium efficiens (strain DSM 44549 / YS-314 / AJ 12310 / JCM 11189 / NBRC 100395).